Consider the following 751-residue polypeptide: Serine/threonine-protein kinase-like protein CCR4 (751 aa).

A signal peptide spans 1-31; the sequence is MALTISISCFSSYFVSLLLLVLSSFSFVCFS. The Extracellular portion of the chain corresponds to 32-366; that stretch reads LSTVSISHIS…NKTWSRRNIA (335 aa). 7 N-linked (GlcNAc...) asparagine glycosylation sites follow: Asn-42, Asn-51, Asn-98, Asn-243, Asn-254, Asn-283, and Asn-357. Residues 367–387 traverse the membrane as a helical segment; it reads FLVVGCVGTFSLLLVISFLIF. At 388–751 the chain is on the cytoplasmic side; sequence KSHCRCRVHD…TETVSRSNTY (364 aa). The Protein kinase domain maps to 443–733; the sequence is FSVRFHLGIG…EVVSKLESAL (291 aa). Residues 449 to 457 and Lys-471 contribute to the ATP site; that span reads LGIGSFGSV. Asp-579 functions as the Proton acceptor in the catalytic mechanism.

It belongs to the protein kinase superfamily. Ser/Thr protein kinase family. Homodimer. In terms of tissue distribution, expressed in roots, leaves, especially in trichomes, shoot apical meristems (SAM), and, to a lower extent, in floral buds.

Its subcellular location is the membrane. It carries out the reaction L-seryl-[protein] + ATP = O-phospho-L-seryl-[protein] + ADP + H(+). The enzyme catalyses L-threonyl-[protein] + ATP = O-phospho-L-threonyl-[protein] + ADP + H(+). This chain is Serine/threonine-protein kinase-like protein CCR4 (CCR4), found in Arabidopsis thaliana (Mouse-ear cress).